A 275-amino-acid polypeptide reads, in one-letter code: NH(3)-dependent NAD(+) synthetase (275 aa).

Position 50–57 (50–57) interacts with ATP; sequence GISGGVDS. A Mg(2+)-binding site is contributed by D56. A deamido-NAD(+)-binding site is contributed by R147. T167 serves as a coordination point for ATP. E172 is a Mg(2+) binding site. Residues K180 and D187 each coordinate deamido-NAD(+). Residues K196 and T218 each contribute to the ATP site. Residue 267–268 coordinates deamido-NAD(+); sequence HK.

This sequence belongs to the NAD synthetase family. As to quaternary structure, homodimer.

It catalyses the reaction deamido-NAD(+) + NH4(+) + ATP = AMP + diphosphate + NAD(+) + H(+). It functions in the pathway cofactor biosynthesis; NAD(+) biosynthesis; NAD(+) from deamido-NAD(+) (ammonia route): step 1/1. Functionally, catalyzes the ATP-dependent amidation of deamido-NAD to form NAD. Uses ammonia as a nitrogen source. The polypeptide is NH(3)-dependent NAD(+) synthetase (Pseudomonas putida (strain ATCC 47054 / DSM 6125 / CFBP 8728 / NCIMB 11950 / KT2440)).